Reading from the N-terminus, the 212-residue chain is ATP-dependent Clp protease proteolytic subunit (212 aa).

Catalysis depends on Ser113, which acts as the Nucleophile. Residue His138 is part of the active site.

This sequence belongs to the peptidase S14 family. Fourteen ClpP subunits assemble into 2 heptameric rings which stack back to back to give a disk-like structure with a central cavity, resembling the structure of eukaryotic proteasomes.

Its subcellular location is the cytoplasm. It catalyses the reaction Hydrolysis of proteins to small peptides in the presence of ATP and magnesium. alpha-casein is the usual test substrate. In the absence of ATP, only oligopeptides shorter than five residues are hydrolyzed (such as succinyl-Leu-Tyr-|-NHMec, and Leu-Tyr-Leu-|-Tyr-Trp, in which cleavage of the -Tyr-|-Leu- and -Tyr-|-Trp bonds also occurs).. Its function is as follows. Cleaves peptides in various proteins in a process that requires ATP hydrolysis. Has a chymotrypsin-like activity. Plays a major role in the degradation of misfolded proteins. The polypeptide is ATP-dependent Clp protease proteolytic subunit (Saccharophagus degradans (strain 2-40 / ATCC 43961 / DSM 17024)).